Here is a 396-residue protein sequence, read N- to C-terminus: Elongation factor Tu (396 aa).

The tr-type G domain maps to 10–206 (KPHVNIGTIG…AVDAYIPEPE (197 aa)). A G1 region spans residues 19–26 (GHVDHGKT). GTP is bound at residue 19-26 (GHVDHGKT). Threonine 26 provides a ligand contact to Mg(2+). The tract at residues 60–64 (GITIA) is G2. The G3 stretch occupies residues 81-84 (DCPG). GTP contacts are provided by residues 81-85 (DCPGH) and 136-139 (NKAD). Residues 136–139 (NKAD) form a G4 region. The tract at residues 174 to 176 (SAL) is G5.

The protein belongs to the TRAFAC class translation factor GTPase superfamily. Classic translation factor GTPase family. EF-Tu/EF-1A subfamily. As to quaternary structure, monomer.

The protein resides in the cytoplasm. The enzyme catalyses GTP + H2O = GDP + phosphate + H(+). Its function is as follows. GTP hydrolase that promotes the GTP-dependent binding of aminoacyl-tRNA to the A-site of ribosomes during protein biosynthesis. This chain is Elongation factor Tu, found in Geobacter metallireducens (strain ATCC 53774 / DSM 7210 / GS-15).